The following is a 292-amino-acid chain: Elongation factor Ts (292 aa).

The interval 80–83 is involved in Mg(2+) ion dislocation from EF-Tu; it reads TDFV.

This sequence belongs to the EF-Ts family.

Its subcellular location is the cytoplasm. Associates with the EF-Tu.GDP complex and induces the exchange of GDP to GTP. It remains bound to the aminoacyl-tRNA.EF-Tu.GTP complex up to the GTP hydrolysis stage on the ribosome. This chain is Elongation factor Ts, found in Cupriavidus pinatubonensis (strain JMP 134 / LMG 1197) (Cupriavidus necator (strain JMP 134)).